The sequence spans 259 residues: Isoepoxydon dehydrogenase patN (259 aa).

NADP(+) contacts are provided by Asn96 and Arg125. Residues Ser143 and Ser144 each act as proton donor in the active site. Residues Tyr158, Lys162, and Ile191 each contribute to the NADP(+) site. The active-site Proton acceptor is Tyr158. Lys162 (lowers pKa of active site Tyr) is an active-site residue.

It belongs to the short-chain dehydrogenases/reductases (SDR) family.

It localises to the cytoplasm. It is found in the cytosol. The catalysed reaction is isoepoxydon + NADP(+) = phyllostine + NADPH + H(+). It functions in the pathway mycotoxin biosynthesis; patulin biosynthesis. In terms of biological role, isoepoxydon dehydrogenase; part of the gene cluster that mediates the biosynthesis of patulin, an acetate-derived tetraketide mycotoxin produced by several fungal species that shows antimicrobial properties against several bacteria. PatN catalyzes the conversion of isoepoxydon into phyllostine. The pathway begins with the synthesis of 6-methylsalicylic acid by the polyketide synthase (PKS) patK via condensation of acetate and malonate units. The 6-methylsalicylic acid decarboxylase patG then catalyzes the decarboxylation of 6-methylsalicylic acid to yield m-cresol (also known as 3-methylphenol). These first reactions occur in the cytosol. The intermediate m-cresol is then transported into the endoplasmic reticulum where the cytochrome P450 monooxygenase patH converts it to m-hydroxybenzyl alcohol, which is further converted to gentisyl alcohol by the cytochrome P450 monooxygenase patI. The oxidoreductases patJ and patO further convert gentisyl alcohol to isoepoxydon in the vacuole. PatN catalyzes then the transformation of isoepoxydon into phyllostine. The cluster protein patF is responsible for the conversion from phyllostine to neopatulin whereas the alcohol dehydrogenase patD converts neopatulin to E-ascladiol. The steps between isoepoxydon and E-ascladiol occur in the cytosol, and E-ascladiol is probably secreted to the extracellular space by one of the cluster-specific transporters patC or patM. Finally, the secreted patulin synthase patE catalyzes the conversion of E-ascladiol to patulin. The chain is Isoepoxydon dehydrogenase patN from Aspergillus clavatus (strain ATCC 1007 / CBS 513.65 / DSM 816 / NCTC 3887 / NRRL 1 / QM 1276 / 107).